The chain runs to 584 residues: Chaperonin GroEL 1 (584 aa).

ATP is bound by residues 29–32 (TIGP), 86–90 (DGTTT), glycine 413, and aspartate 492. A disordered region spans residues 523–542 (EPEAAAPGGPGGDPMGGMGG). The span at 530 to 542 (GGPGGDPMGGMGG) shows a compositional bias: gly residues.

It belongs to the chaperonin (HSP60) family. As to quaternary structure, forms a cylinder of 14 subunits composed of two heptameric rings stacked back-to-back. Interacts with the co-chaperonin GroES.

The protein localises to the cytoplasm. It carries out the reaction ATP + H2O + a folded polypeptide = ADP + phosphate + an unfolded polypeptide.. In terms of biological role, together with its co-chaperonin GroES, plays an essential role in assisting protein folding. The GroEL-GroES system forms a nano-cage that allows encapsulation of the non-native substrate proteins and provides a physical environment optimized to promote and accelerate protein folding. This is Chaperonin GroEL 1 from Prochlorococcus marinus (strain MIT 9312).